The sequence spans 660 residues: Leucine-rich repeat transmembrane protein FLRT2 (660 aa).

The signal sequence occupies residues 1 to 35 (MGLQTTKWPSHGAFFLKSWLIISLGLYSQVSKLLA). 2 disulfides stabilise this stretch: C36/C42 and C40/C49. The 28-residue stretch at 36-63 (CPSVCRCDRNFVYCNERSLTSVPLGIPE) folds into the LRRNT domain. Residues 36 to 541 (CPSVCRCDRN…TTSHSMGSPF (506 aa)) lie on the Extracellular side of the membrane. LRR repeat units lie at residues 64–85 (GVTV…AELH), 89–109 (SVHT…NLPK), 110–131 (NVRV…ALAQ), 134–155 (KLEE…DGAF), 160–181 (SLKL…LPVD), 182–202 (LQEL…AFQN), 205–225 (SLER…AEGT), 231–252 (KLKE…LPGT), 253–274 (HLIR…AFSN), and 277–298 (KLER…VFDN). An N-linked (GlcNAc...) asparagine glycan is attached at N202. N-linked (GlcNAc...) asparagine glycosylation is present at N298. The LRRCT domain occupies 310–362 (NPWFCDCSIKWVTEWLKYIPSSLNVRGFMCQGPEQVRGMAVRELNMNLLSCPT). 2 cysteine pairs are disulfide-bonded: C314–C339 and C316–C360. Low complexity predominate over residues 373-409 (APSTASPTTQPPTLSIPNPSRSYTPPTPTTSKLPTIP). Residues 373 to 413 (APSTASPTTQPPTLSIPNPSRSYTPPTPTTSKLPTIPDWDG) are disordered. A Fibronectin type-III domain is found at 419 to 517 (PPISERIQLS…ICSEATTHAS (99 aa)). N433 and N521 each carry an N-linked (GlcNAc...) asparagine glycan. The chain crosses the membrane as a helical span at residues 542 to 562 (LLAGLIGGAVIFVLVVLLSVF). Topologically, residues 563 to 660 (CWHMHKKGRY…SVPDLEHCHT (98 aa)) are cytoplasmic.

In terms of assembly, self-associates (via leucine-rich repeats), giving rise to homooligomers. Interacts with FGFR1. Interacts with FGFR2. Interacts (via extracellular domain) with ADGRL1/LPHN1. Interacts (via extracellular domain) with ADGRL3 (via olfactomedin-like domain). Interacts (via extracellular domain) with UNC5D (via the first Ig-like domain). Can also interact (via extracellular domain) with UNC5B, but with much lower affinity. Interacts (via extracellular domain) with FN1. Post-translationally, N-glycosylated. In terms of processing, proteolytic cleavage in the juxtamembrane region gives rise to a soluble ectodomain. Cleavage is probably effected by a metalloprotease. As to expression, expressed in pancreas, skeletal muscle, brain, and heart.

Its subcellular location is the cell membrane. It is found in the endoplasmic reticulum membrane. The protein resides in the cell junction. The protein localises to the focal adhesion. It localises to the secreted. Its subcellular location is the extracellular space. It is found in the extracellular matrix. The protein resides in the microsome membrane. The protein localises to the synapse. It localises to the synaptosome. Functions in cell-cell adhesion, cell migration and axon guidance. Mediates cell-cell adhesion via its interactions with ADGRL3 and probably also other latrophilins that are expressed at the surface of adjacent cells. May play a role in the migration of cortical neurons during brain development via its interaction with UNC5D. Mediates axon growth cone collapse and plays a repulsive role in neuron guidance via its interaction with UNC5D, and possibly also other UNC-5 family members. Plays a role in fibroblast growth factor-mediated signaling cascades. Required for normal organization of the cardiac basement membrane during embryogenesis, and for normal embryonic epicardium and heart morphogenesis. The sequence is that of Leucine-rich repeat transmembrane protein FLRT2 (FLRT2) from Homo sapiens (Human).